We begin with the raw amino-acid sequence, 171 residues long: Anthrone oxygenase dmxR16 (171 aa).

The next 3 helical transmembrane spans lie at 21 to 41 (VIAA…ISMI), 67 to 87 (GHII…FSAL), and 96 to 116 (YALA…FMTP). Residues asparagine 118 and asparagine 129 are each glycosylated (N-linked (GlcNAc...) asparagine). Residues 145–165 (WLHATRSMFPLIGAILGFTGI) traverse the membrane as a helical segment.

This sequence belongs to the anthrone oxygenase family.

The protein localises to the membrane. It carries out the reaction emodin anthrone + O2 = emodin + H2O + H(+). Its pathway is secondary metabolite biosynthesis. Its function is as follows. Anthrone oxygenase; part of the gene cluster that mediates the biosynthesis of the dimeric xanthones cryptosporioptides. The pathway begins with the synthesis of atrochrysone thioester by the polyketide synthase dmx-nrPKS. The atrochrysone carboxyl ACP thioesterase dmxR1 then breaks the thioester bond and releases the atrochrysone carboxylic acid from dmx-nrPKS. Atrochrysone carboxylic acid is decarboxylated by the decarboxylase dmxR15, and oxidized by the anthrone oxygenase dmxR16 to yield emodin. Emodin is then reduced to emodin hydroquinone by the oxidoreductase dmxR7. A-ring reduction by the short chain dehydrogenase dmxR18, dehydration by the scytalone dehydratase-like protein dmxR17 and probable spontaneous re-oxidation, results in overall deoxygenation to chrysophanol. Baeyer-Villiger oxidation by the Baeyer-Villiger monooxygenase (BVMO) dmxR6 then yields monodictylactone in equilibrium with monodictyphenone. In the case of the cryptosporioptides biosynthesis, monodictylactone is reduced at C-12 to an alcohol (by the short chain dehydrogenases dmxR12 or dmxR8) and hydroxylated at C-5 by dmxR9, yielding the electron-rich aromatic which could eliminate H(2)O to form the ortho-quinonemethide, followed by tautomerisation to paraquinone and complete the formal reduction to produce the 10-methylgroup. Conjugate addition of C-4a-OH to the resulting paraquinone by the monooxygenase dmxR10 then gives cyclohexadienone, which is then reduced at C-5 by the short chain dehydrogenase dmxR3 to give the dihydroxanthone. The 6,7-epoxide in the cryptosporioptides could be introduced by the cytochrome P450 monooxygenase dmxL3. The highly reducing PKS dmxL2 manufactures butyrate, which is further carboxylated by dmxL1 to form ethylmalonate. It is not yet clear whether the carboxylation occurs while the butyrate is attached to the ACP of dmxL2, but this unusual fungal metabolite could then be esterified to O-5 by the O-acetyltransferase dmxR13. Finally, dimerization performed by dmxR5 gives the observed dimers cryptosporioptides A, B and C as the final products of the pathway. This is Anthrone oxygenase dmxR16 from Cryptosporiopsis sp. (strain 8999).